The sequence spans 213 residues: Protein Flattop (213 aa).

The disordered stretch occupies residues 127–213; it reads VDQPAEQSKI…HNSRPASQEK (87 aa). Residues 151-213 are compositionally biased toward polar residues; the sequence is QHIQDQSRPA…HNSRPASQEK (63 aa).

The protein belongs to the Flattop family.

It localises to the cytoplasm. The protein localises to the cytoskeleton. Its subcellular location is the cilium basal body. It is found in the cell projection. The protein resides in the cilium. It localises to the apical cell membrane. The protein localises to the cilium axoneme. Microtubule inner protein (MIP) part of the dynein-decorated doublet microtubules (DMTs) in cilia axoneme. Acts as a regulator of cilium basal body docking and positioning in mono- and multiciliated cells. Regulates basal body docking and cilia formation in multiciliated lung cells. Regulates kinocilium positioning and stereocilia bundle morphogenesis in the inner ear. This is Protein Flattop from Danio rerio (Zebrafish).